Reading from the N-terminus, the 260-residue chain is Putative enoyl-CoA hydratase/isomerase YngF (260 aa).

This sequence belongs to the enoyl-CoA hydratase/isomerase family.

The sequence is that of Putative enoyl-CoA hydratase/isomerase YngF (yngF) from Bacillus subtilis (strain 168).